A 206-amino-acid chain; its full sequence is Transmembrane emp24 domain-containing protein bai (206 aa).

The signal sequence occupies residues Met1–Ser20. The Lumenal segment spans residues Val21–Arg172. The 111-residue stretch at Gln30–Arg140 folds into the GOLD domain. A helical transmembrane segment spans residues Val173–Leu193. Residues Tyr194–Glu206 are Cytoplasmic-facing.

Belongs to the EMP24/GP25L family.

The protein localises to the membrane. Its function is as follows. Eca and bai are essential, though not redundant, for dorsoventral patterning of the embryo. Specifically required during early embryogenesis for the activity of maternal tkv, while the zygotic tkv is not affected. This chain is Transmembrane emp24 domain-containing protein bai, found in Drosophila willistoni (Fruit fly).